The sequence spans 210 residues: Urease accessory protein UreF (210 aa).

The protein belongs to the UreF family. UreD, UreF and UreG form a complex that acts as a GTP-hydrolysis-dependent molecular chaperone, activating the urease apoprotein by helping to assemble the nickel containing metallocenter of UreC. The UreE protein probably delivers the nickel.

It localises to the cytoplasm. Its function is as follows. Required for maturation of urease via the functional incorporation of the urease nickel metallocenter. The polypeptide is Urease accessory protein UreF (Dinoroseobacter shibae (strain DSM 16493 / NCIMB 14021 / DFL 12)).